The primary structure comprises 154 residues: Large ribosomal subunit protein uL13 (154 aa).

Belongs to the universal ribosomal protein uL13 family. Part of the 50S ribosomal subunit.

Functionally, this protein is one of the early assembly proteins of the 50S ribosomal subunit, although it is not seen to bind rRNA by itself. It is important during the early stages of 50S assembly. The protein is Large ribosomal subunit protein uL13 of Sinorhizobium medicae (strain WSM419) (Ensifer medicae).